The chain runs to 141 residues: MKSHGLINDSIGDMLTRIRNACLAKKSSVSIPFTRLNQNIAQILEQEGFIQTYQVSLDSQDLTIRLKYRSKKIYRGKKKESCITNLKRISKPGLRIYSNHKDILRILGGTGIVIVSTPEGLMTDREARLRGIGGELLCSVW.

The protein belongs to the universal ribosomal protein uS8 family. In terms of assembly, part of the 30S ribosomal subunit.

Its subcellular location is the plastid. It is found in the chloroplast. One of the primary rRNA binding proteins, it binds directly to 16S rRNA central domain where it helps coordinate assembly of the platform of the 30S subunit. The polypeptide is Small ribosomal subunit protein uS8c (rps8) (Chlamydomonas reinhardtii (Chlamydomonas smithii)).